A 607-amino-acid chain; its full sequence is (R)-limonene synthase 1, chloroplastic (607 aa).

Residues 1 to 52 (MSSCINPSTLATSVNGFKCLPLATNRAAIRIMAKNKPVQCLVSTKYDNLTVD) constitute a chloroplast transit peptide. Positions 343 and 347 each coordinate Mn(2+). Positions 343, 347, 485, 488, and 504 each coordinate substrate. Residues 343 to 347 (DDIYD) carry the DDXXD motif motif. A Mn(2+)-binding site is contributed by Asp488.

This sequence belongs to the terpene synthase family. It depends on Mg(2+) as a cofactor. Mn(2+) serves as cofactor.

Its subcellular location is the plastid. It localises to the chloroplast. It carries out the reaction (2E)-geranyl diphosphate = (4R)-limonene + diphosphate. Inhibited by 2-fluorogeranyl diphosphate (FGPP) and 2-fluoroneryl diphosphate (FNPP). Functionally, catalyzes the conversion of geranyl diphosphate to (+)-(4R)-limonene. Produces exclusively the (+)-enantiomer. Can use neryl diphosphate as substrate. Has no activity with farnesyl diphosphate. This chain is (R)-limonene synthase 1, chloroplastic, found in Citrus sinensis (Sweet orange).